The chain runs to 640 residues: Probable potassium transport system protein Kup 1 (640 aa).

12 helical membrane-spanning segments follow: residues L24–L44, I67–V87, V116–I136, P154–I174, F186–V206, T222–V242, W264–L284, M296–I316, I354–F374, A382–V402, L411–A431, and V436–T456.

The protein belongs to the HAK/KUP transporter (TC 2.A.72) family.

It localises to the cell inner membrane. It carries out the reaction K(+)(in) + H(+)(in) = K(+)(out) + H(+)(out). Functionally, transport of potassium into the cell. Likely operates as a K(+):H(+) symporter. The chain is Probable potassium transport system protein Kup 1 from Paramagnetospirillum magneticum (strain ATCC 700264 / AMB-1) (Magnetospirillum magneticum).